We begin with the raw amino-acid sequence, 358 residues long: L-Ala-D/L-Glu epimerase (358 aa).

Positions 24, 135, and 160 each coordinate substrate. Lys-162 serves as the catalytic Proton acceptor; specific for (R)-substrate epimerization. Mg(2+) contacts are provided by Asp-190, Glu-218, and Asp-243. The active-site Proton acceptor; specific for (S)-substrate epimerization is Lys-267. Residues Cys-295, Asp-320, and Asp-322 each coordinate substrate.

Belongs to the mandelate racemase/muconate lactonizing enzyme family. Mg(2+) is required as a cofactor.

The catalysed reaction is L-alanyl-L-glutamate = L-alanyl-D-glutamate. It functions in the pathway cell wall degradation; peptidoglycan degradation. In terms of biological role, catalyzes the epimerization of L-Ala-D-Glu to L-Ala-L-Glu and has probably a role in the metabolism of the murein peptide, of which L-Ala-D-Glu is a component. Is also able to catalyze the epimerization of L-Ala-D-Asp. The chain is L-Ala-D/L-Glu epimerase from Clostridium acetobutylicum (strain ATCC 824 / DSM 792 / JCM 1419 / IAM 19013 / LMG 5710 / NBRC 13948 / NRRL B-527 / VKM B-1787 / 2291 / W).